We begin with the raw amino-acid sequence, 185 residues long: DNA-directed RNA polymerase 21 kDa subunit (185 aa).

It belongs to the poxviridae DNA-directed RNA polymerase 22 kDa subunit family. In terms of assembly, the DNA-dependent RNA polymerase used for intermediate and late genes expression consists of eight subunits Rpo30/OPG66, Rpo7/OPG90, Rpo22/OPG103, Rpo147/OPG105, Rpo18/OPG119, Rpo19/OPG131, Rpo132/OPG151 and Rpo35/OPG156. The same holoenzyme, with the addition of the transcription-specificity factor OPG109, is used for early gene expression.

The protein resides in the virion. It carries out the reaction RNA(n) + a ribonucleoside 5'-triphosphate = RNA(n+1) + diphosphate. Part of the DNA-dependent RNA polymerase which catalyzes the transcription of viral DNA into RNA using the four ribonucleoside triphosphates as substrates. Responsible for the transcription of early, intermediate and late genes. DNA-dependent RNA polymerase associates with the early transcription factor (ETF), itself composed of OPG118 and OPG133, thereby allowing the early genes transcription. Late transcription, and probably also intermediate transcription, require newly synthesized RNA polymerase. The polypeptide is DNA-directed RNA polymerase 21 kDa subunit (OPG103) (Oryctolagus cuniculus (Rabbit)).